A 249-amino-acid polypeptide reads, in one-letter code: MKKTGYFLLAVVIVAAVAGIGYWKLAANPNALRDIVLQQCVPNQLQQQNPAPCAEVKPDAGYVVFKDRNGPLQYLLMPTYRINGTESPLLVEPYTPNFFWLAWQARSFMSQKYGKDIPDSAISLAINSRSGRTQNHFHIHISCLRPDVRAQLDDNLAKVSTRWLPLPGGLRGNEYLARRVTESELAQRSPFMMLAEEVPDAREHMGSYALAVVRQSDDSFVLLATQRNLLAFNLASAEEIQDHQCEILQ.

The chain crosses the membrane as a helical span at residues Phe7–Ala27.

Belongs to the Cdh family.

It localises to the cell inner membrane. It carries out the reaction a CDP-1,2-diacyl-sn-glycerol + H2O = a 1,2-diacyl-sn-glycero-3-phosphate + CMP + 2 H(+). The protein operates within phospholipid metabolism; CDP-diacylglycerol degradation; phosphatidate from CDP-diacylglycerol: step 1/1. The protein is CDP-diacylglycerol pyrophosphatase of Citrobacter koseri (strain ATCC BAA-895 / CDC 4225-83 / SGSC4696).